The primary structure comprises 72 residues: Translation initiation factor IF-1 (72 aa).

The region spanning 1–72 (MAKEDNIEMQ…SKGRIVFRSR (72 aa)) is the S1-like domain.

It belongs to the IF-1 family. Component of the 30S ribosomal translation pre-initiation complex which assembles on the 30S ribosome in the order IF-2 and IF-3, IF-1 and N-formylmethionyl-tRNA(fMet); mRNA recruitment can occur at any time during PIC assembly.

It is found in the cytoplasm. One of the essential components for the initiation of protein synthesis. Stabilizes the binding of IF-2 and IF-3 on the 30S subunit to which N-formylmethionyl-tRNA(fMet) subsequently binds. Helps modulate mRNA selection, yielding the 30S pre-initiation complex (PIC). Upon addition of the 50S ribosomal subunit IF-1, IF-2 and IF-3 are released leaving the mature 70S translation initiation complex. This is Translation initiation factor IF-1 from Sodalis glossinidius (strain morsitans).